Reading from the N-terminus, the 94-residue chain is MGRSLKKGPYVDPKLLKKIRELNEKGEKKIIKTWSRRSVIVPEMVGHTIAVYNGRKHIPVYITENMIGHRLGEFAPTRTFTGHRIPTARITAIK.

The protein belongs to the universal ribosomal protein uS19 family.

In terms of biological role, protein S19 forms a complex with S13 that binds strongly to the 16S ribosomal RNA. The chain is Small ribosomal subunit protein uS19 from Dictyoglomus turgidum (strain DSM 6724 / Z-1310).